We begin with the raw amino-acid sequence, 285 residues long: Bifunctional protein FolD (285 aa).

Residues 164-166 (GRS), Ser193, and Ile234 contribute to the NADP(+) site.

Belongs to the tetrahydrofolate dehydrogenase/cyclohydrolase family. As to quaternary structure, homodimer.

The enzyme catalyses (6R)-5,10-methylene-5,6,7,8-tetrahydrofolate + NADP(+) = (6R)-5,10-methenyltetrahydrofolate + NADPH. It carries out the reaction (6R)-5,10-methenyltetrahydrofolate + H2O = (6R)-10-formyltetrahydrofolate + H(+). Its pathway is one-carbon metabolism; tetrahydrofolate interconversion. Functionally, catalyzes the oxidation of 5,10-methylenetetrahydrofolate to 5,10-methenyltetrahydrofolate and then the hydrolysis of 5,10-methenyltetrahydrofolate to 10-formyltetrahydrofolate. In Desulfovibrio desulfuricans (strain ATCC 27774 / DSM 6949 / MB), this protein is Bifunctional protein FolD.